The chain runs to 348 residues: VIP36-like protein (348 aa).

The first 38 residues, Met-1–Gly-38, serve as a signal peptide directing secretion. The Lumenal portion of the chain corresponds to Pro-39–Ala-313. An L-type lectin-like domain is found at Glu-49–Leu-274. The a carbohydrate site is built by Ser-93 and Asp-128. The Ca(2+) site is built by Asp-159, Tyr-161, and Asn-163. The a carbohydrate site is built by Tyr-161 and Asn-163. Asn-181 is a glycosylation site (N-linked (GlcNAc...) asparagine). His-188 serves as a coordination point for a carbohydrate. Asp-191 contributes to the Ca(2+) binding site. A disulfide bridge links Cys-200 with Cys-237. Gly-258–Leu-260 lines the a carbohydrate pocket. Residues Leu-314 to Ile-334 traverse the membrane as a helical segment. The Cytoplasmic portion of the chain corresponds to Leu-335–Tyr-348. Positions Arg-344–Arg-346 match the Endoplasmic reticulum retention signal motif.

The protein localises to the endoplasmic reticulum membrane. The protein resides in the golgi apparatus membrane. May be involved in the regulation of export from the endoplasmic reticulum of a subset of glycoproteins. May function as a regulator of ERGIC-53. This Bos taurus (Bovine) protein is VIP36-like protein (LMAN2L).